The chain runs to 311 residues: CARD domain-containing protein E10 (311 aa).

The CARD domain maps to 21-110 (IWDVERLCLE…EHLVDLLERA (90 aa)). 3 disordered regions span residues 125–181 (ESGA…GGVY), 203–230 (GAGR…GGRD), and 243–311 (IPEP…FFCC). The span at 140–152 (EDNSGYTALLPTN) shows a compositional bias: polar residues. The segment covering 252-272 (SGGGGRGGGVRYDAGGDGRLG) has biased composition (gly residues).

The protein localises to the host cell membrane. Activates host NF-kappa-B and JNK pathways. Induces hyperphosphorylation and redistribution of host bcl-10 from the cytoplasm to the plasma membrane. The inhibitory effect of cellular bcl-10 on NF-kappa-B pathway is then overcome allowing NF-kappa-B activation. The chain is CARD domain-containing protein E10 (E10) from Equus caballus (Horse).